The sequence spans 1110 residues: Nonribisomal peptide synthetase benY (1110 aa).

Positions 47–443 are adenylation; that stretch reads RALEFPEKIA…GRKDHQLKVR (397 aa). In terms of domain architecture, Carrier spans 575–651; sequence TLETESEKIL…EMAQSARVVP (77 aa). An O-(pantetheine 4'-phosphoryl)serine modification is found at S612. Positions 713-1025 are condensation; it reads YILDGDVDFD…IFHHQNIDTK (313 aa).

Belongs to the NRP synthetase family.

It participates in secondary metabolite biosynthesis. Its function is as follows. Nonribisomal peptide synthetase; part of the gene cluster that mediates the biosynthesis of benzomalvin A and D. The pathway begins with the loading of amino acid precursors onto the A domains of the non ribosomal peptide synthetases benY and benZ. BenY and the A1 domain of benZ are loaded with anthranilate (Anth), while the A2 domain of benZ is loaded with phenylalanine (Phe). N-methylation of Phe by the methyltransferase benX may happen before loading of Phe onto benZ, after loading of Phe, or after dipeptide formation. Condensation of Anth with the secondary amine of NmPhe or Phe is catalyzed by the C1 domain of benZ, forming a dipeptide intermediate. This is followed by in trans condensation of the Anth-NmPhe dipeptide with Anth bound to the T domain of benY by the C2 domain of benZ to form the linear tripeptide Anth-NmPhe-Anth. Cyclization and release of the tripeptide is then catalyzed by the C-terminal C domain of benY and the resulting 11-member macrocyclic intermediate is expected to spontaneously collapse to form the benzodiazepine core. Benzomalvin A is in conformational equilibrium with its atropisomer, benzomalvin D. In Aspergillus terreus, this protein is Nonribisomal peptide synthetase benY.